Consider the following 667-residue polypeptide: Acetolactate synthase 1, chloroplastic (667 aa).

A compositionally biased stretch (low complexity) spans 1-35 (MAAAAPSPSSSAFSKTLSPSSSTSSTLLPRSTFPF). Residues 1–45 (MAAAAPSPSSSAFSKTLSPSSSTSSTLLPRSTFPFPHHPHKTTPP) form a disordered region. The N-terminal 94 residues, 1-94 (MAAAAPSPSS…VSRFAPDEPR (94 aa)), are a transit peptide targeting the chloroplast. E141 provides a ligand contact to thiamine diphosphate. An intrachain disulfide couples C161 to C307. FAD is bound by residues R243, 349-370 (HGTV…FGVR), and 392-411 (DIDS…ICAD). Positions 484–564 (QHQMWAAQYY…VKIMLLNNQH (81 aa)) are thiamine pyrophosphate binding. The Mg(2+) site is built by D535 and N562.

Belongs to the TPP enzyme family. Requires Mg(2+) as cofactor. Thiamine diphosphate serves as cofactor.

It localises to the plastid. It is found in the chloroplast. It carries out the reaction 2 pyruvate + H(+) = (2S)-2-acetolactate + CO2. Its pathway is amino-acid biosynthesis; L-isoleucine biosynthesis; L-isoleucine from 2-oxobutanoate: step 1/4. It functions in the pathway amino-acid biosynthesis; L-valine biosynthesis; L-valine from pyruvate: step 1/4. The protein is Acetolactate synthase 1, chloroplastic (ALS SURA) of Nicotiana tabacum (Common tobacco).